We begin with the raw amino-acid sequence, 257 residues long: tRNA pseudouridine synthase A (257 aa).

The Nucleophile role is filled by D53. Y111 is a binding site for substrate.

This sequence belongs to the tRNA pseudouridine synthase TruA family. In terms of assembly, homodimer.

It catalyses the reaction uridine(38/39/40) in tRNA = pseudouridine(38/39/40) in tRNA. Its function is as follows. Formation of pseudouridine at positions 38, 39 and 40 in the anticodon stem and loop of transfer RNAs. This chain is tRNA pseudouridine synthase A, found in Xylella fastidiosa (strain M23).